A 409-amino-acid chain; its full sequence is MVQRPRGTRDFLPDEMEARRMIEGRMREAVRRWGYREVATPIFEDLSLFTMRSGQGIIDEMYVFQDKGGRDLALRPELTAAVLRMYVNEARVLAKPLRWCYFADCFRYERPQKGRYRQFWQFGVELIGADTAAADAEVILVADNAIRSSGLDYDLKIGHLGLMKHLLADVGEEVRRKVMAYLDKKEFDGLKDYLETAGLAALTDPLTRLLAAETLDEAFAVTGPLPEEGRIREMAALLDATGVRYSYNFGIARGLDYYTGMVFEGFAKNLGAESQIVGGGAYRLAQVFGGDDAPSVGFAIGFDRVMVALGEVQTRKQKIVGVVSTAEGRPFAFRVANAFRTAGIRADLDLSDRGLGAQLARAAKEADFAVLIGEREVATGTVTLKNLATGTQTAVTIDLAVRTVIDGSR.

It belongs to the class-II aminoacyl-tRNA synthetase family.

It is found in the cytoplasm. It carries out the reaction tRNA(His) + L-histidine + ATP = L-histidyl-tRNA(His) + AMP + diphosphate + H(+). This chain is Histidine--tRNA ligase, found in Methanosphaerula palustris (strain ATCC BAA-1556 / DSM 19958 / E1-9c).